The sequence spans 635 residues: Glutamyl-tRNA(Gln) amidotransferase subunit E (635 aa).

The disordered stretch occupies residues 415–437 (LPDGNTEYMRPLPGKARMYPETD).

This sequence belongs to the GatB/GatE family. GatE subfamily. In terms of assembly, heterodimer of GatD and GatE.

The enzyme catalyses L-glutamyl-tRNA(Gln) + L-glutamine + ATP + H2O = L-glutaminyl-tRNA(Gln) + L-glutamate + ADP + phosphate + H(+). In terms of biological role, allows the formation of correctly charged Gln-tRNA(Gln) through the transamidation of misacylated Glu-tRNA(Gln) in organisms which lack glutaminyl-tRNA synthetase. The reaction takes place in the presence of glutamine and ATP through an activated gamma-phospho-Glu-tRNA(Gln). The GatDE system is specific for glutamate and does not act on aspartate. The protein is Glutamyl-tRNA(Gln) amidotransferase subunit E of Pyrococcus horikoshii (strain ATCC 700860 / DSM 12428 / JCM 9974 / NBRC 100139 / OT-3).